A 353-amino-acid polypeptide reads, in one-letter code: Photosystem II D2 protein (353 aa).

N-acetylthreonine is present on Thr2. At Thr2 the chain carries Phosphothreonine. A helical membrane pass occupies residues 41–61 (CAYFALGGWFTGTTFVTSWYT). His118 is a chlorophyll a binding site. A helical membrane pass occupies residues 125-141 (GFMLRQFELARSVQLRP). Pheophytin a is bound by residues Gln130 and Asn143. Residues 153–166 (VFVSVFLIYPLGQS) traverse the membrane as a helical segment. His198 is a binding site for chlorophyll a. The chain crosses the membrane as a helical span at residues 208–228 (AALLCAIHGATVENTLFEDGD). A plastoquinone-binding residues include His215 and Phe262. Residue His215 coordinates Fe cation. Fe cation is bound at residue His269. The chain crosses the membrane as a helical span at residues 279 to 295 (GLWMSAIGVVGLALNLR).

It belongs to the reaction center PufL/M/PsbA/D family. PSII is composed of 1 copy each of membrane proteins PsbA, PsbB, PsbC, PsbD, PsbE, PsbF, PsbH, PsbI, PsbJ, PsbK, PsbL, PsbM, PsbT, PsbX, PsbY, PsbZ, Psb30/Ycf12, at least 3 peripheral proteins of the oxygen-evolving complex and a large number of cofactors. It forms dimeric complexes. Requires The D1/D2 heterodimer binds P680, chlorophylls that are the primary electron donor of PSII, and subsequent electron acceptors. It shares a non-heme iron and each subunit binds pheophytin, quinone, additional chlorophylls, carotenoids and lipids. There is also a Cl(-1) ion associated with D1 and D2, which is required for oxygen evolution. The PSII complex binds additional chlorophylls, carotenoids and specific lipids. as cofactor.

The protein localises to the plastid. It localises to the chloroplast thylakoid membrane. The catalysed reaction is 2 a plastoquinone + 4 hnu + 2 H2O = 2 a plastoquinol + O2. In terms of biological role, photosystem II (PSII) is a light-driven water:plastoquinone oxidoreductase that uses light energy to abstract electrons from H(2)O, generating O(2) and a proton gradient subsequently used for ATP formation. It consists of a core antenna complex that captures photons, and an electron transfer chain that converts photonic excitation into a charge separation. The D1/D2 (PsbA/PsbD) reaction center heterodimer binds P680, the primary electron donor of PSII as well as several subsequent electron acceptors. D2 is needed for assembly of a stable PSII complex. The polypeptide is Photosystem II D2 protein (Drimys granadensis).